The sequence spans 196 residues: Holliday junction branch migration complex subunit RuvA (196 aa).

A domain I region spans residues 1-63; it reads MYEYFKGIIS…EDAELLYGFA (63 aa). Residues 64–142 form a domain II region; sequence TEEEKQLFLS…AADGLAESKA (79 aa). The segment at 143–146 is flexible linker; sequence PVQT. Residues 147 to 196 form a domain III region; that stretch reads VDNQELEEAMEAMLALGYKATELKKIKKFFEGTTDTAENYIKSALKMLVK.

It belongs to the RuvA family. As to quaternary structure, homotetramer. Forms an RuvA(8)-RuvB(12)-Holliday junction (HJ) complex. HJ DNA is sandwiched between 2 RuvA tetramers; dsDNA enters through RuvA and exits via RuvB. An RuvB hexamer assembles on each DNA strand where it exits the tetramer. Each RuvB hexamer is contacted by two RuvA subunits (via domain III) on 2 adjacent RuvB subunits; this complex drives branch migration. In the full resolvosome a probable DNA-RuvA(4)-RuvB(12)-RuvC(2) complex forms which resolves the HJ.

The protein resides in the cytoplasm. The RuvA-RuvB-RuvC complex processes Holliday junction (HJ) DNA during genetic recombination and DNA repair, while the RuvA-RuvB complex plays an important role in the rescue of blocked DNA replication forks via replication fork reversal (RFR). RuvA specifically binds to HJ cruciform DNA, conferring on it an open structure. The RuvB hexamer acts as an ATP-dependent pump, pulling dsDNA into and through the RuvAB complex. HJ branch migration allows RuvC to scan DNA until it finds its consensus sequence, where it cleaves and resolves the cruciform DNA. The polypeptide is Holliday junction branch migration complex subunit RuvA (Streptococcus gordonii (strain Challis / ATCC 35105 / BCRC 15272 / CH1 / DL1 / V288)).